We begin with the raw amino-acid sequence, 481 residues long: Inosine-5'-monophosphate dehydrogenase (481 aa).

CBS domains follow at residues 92 to 148 (VIND…SKKV) and 152 to 209 (MTKM…PEAN). Residues Asp-244 and 293 to 295 (GIG) contribute to the NAD(+) site. Residues Gly-295 and Gly-297 each contribute to the K(+) site. Ser-298 contributes to the IMP binding site. Cys-300 lines the K(+) pocket. Residue Cys-300 is the Thioimidate intermediate of the active site. Residues 333-335 (DGG), 356-357 (GS), and 380-384 (YRGMG) each bind IMP. Arg-396 (proton acceptor) is an active-site residue. Glu-410 provides a ligand contact to IMP. 3 residues coordinate K(+): Glu-464, Ser-465, and His-466.

It belongs to the IMPDH/GMPR family. Homotetramer. K(+) is required as a cofactor.

The catalysed reaction is IMP + NAD(+) + H2O = XMP + NADH + H(+). The protein operates within purine metabolism; XMP biosynthesis via de novo pathway; XMP from IMP: step 1/1. With respect to regulation, mycophenolic acid (MPA) is a non-competitive inhibitor that prevents formation of the closed enzyme conformation by binding to the same site as the amobile flap. In contrast, mizoribine monophosphate (MZP) is a competitive inhibitor that induces the closed conformation. MPA is a potent inhibitor of mammalian IMPDHs but a poor inhibitor of the bacterial enzymes. MZP is a more potent inhibitor of bacterial IMPDH. Its function is as follows. Catalyzes the conversion of inosine 5'-phosphate (IMP) to xanthosine 5'-phosphate (XMP), the first committed and rate-limiting step in the de novo synthesis of guanine nucleotides, and therefore plays an important role in the regulation of cell growth. In Helicobacter pylori (strain J99 / ATCC 700824) (Campylobacter pylori J99), this protein is Inosine-5'-monophosphate dehydrogenase.